Consider the following 77-residue polypeptide: Membrane-associated ATPase epsilon chain (77 aa).

It to E.hirae NtpH. Sul-ATPase is composed of six (or maybe five) subunits: alpha, beta, delta, gamma, C (proteolipid), and possibly epsilon.

It carries out the reaction ATP + H2O + 4 H(+)(in) = ADP + phosphate + 5 H(+)(out). The protein is Membrane-associated ATPase epsilon chain (atpE) of Sulfolobus acidocaldarius (strain ATCC 33909 / DSM 639 / JCM 8929 / NBRC 15157 / NCIMB 11770).